We begin with the raw amino-acid sequence, 364 residues long: RNA-binding protein 4 (364 aa).

2 RRM domains span residues 2-72 (VKLF…ASKN) and 78-148 (TKLH…LSTS). A Glycyl lysine isopeptide (Lys-Gly) (interchain with G-Cter in SUMO2) cross-link involves residue Lys-79. Ser-86 carries the phosphoserine modification. Lys-92 is covalently cross-linked (Glycyl lysine isopeptide (Lys-Gly) (interchain with G-Cter in SUMO2)). The CCHC-type zinc-finger motif lies at 160 to 177 (SGCYRCGKEGHWSKECPI). The tract at residues 196-364 (AVRTPYTMSY…YADRARYSAF (169 aa)) is interaction with TNPO3. Residue Ser-309 is modified to Phosphoserine.

As to quaternary structure, interacts with TNPO3; the interaction mediates nuclear import of the protein and is disrupted by nuclear Ran bound to GTP. Interacts with EIF4G1 and WT1. Interacts with EIF4A1; the interaction is modulated under stress-induced conditions. Interacts with AGO1. Interacts with AGO2; the interaction occurs under both cell proliferation and differentiation conditions and in an RNA- and phosphorylation-independent manner. Interacts with DDX5; the interaction occurs in an RNA-independent manner. Interacts with RBPMS; the interaction allows cooperative assembly of RNA-bound stable cell-specific alternative splicing regulatory complexes. Post-translationally, phosphorylated. Phosphorylated in vitro on Ser-309 by SRPK1. Phosphorylation on Ser-309 is induced upon cell stress signaling, which alters its subcellular localization and may modulate its activity on IRES-mediated mRNA translation. Phosphorylation on Ser-309 is induced upon cell muscle differentiation.

The protein localises to the nucleus. It is found in the nucleolus. The protein resides in the nucleus speckle. It localises to the cytoplasm. Its subcellular location is the cytoplasmic granule. RNA-binding factor involved in multiple aspects of cellular processes like alternative splicing of pre-mRNA and translation regulation. Modulates alternative 5'-splice site and exon selection. Acts as a muscle cell differentiation-promoting factor. Activates exon skipping of the PTB pre-mRNA during muscle cell differentiation. Antagonizes the activity of the splicing factor PTBP1 to modulate muscle cell-specific exon selection of alpha tropomyosin. Binds to intronic pyrimidine-rich sequence of the TPM1 and MAPT pre-mRNAs. Required for the translational activation of PER1 mRNA in response to circadian clock. Binds directly to the 3'-UTR of the PER1 mRNA. Exerts a suppressive activity on Cap-dependent translation via binding to CU-rich responsive elements within the 3'UTR of mRNAs, a process increased under stress conditions or during myocytes differentiation. Recruits EIF4A1 to stimulate IRES-dependent translation initiation in respons to cellular stress. Associates to internal ribosome entry segment (IRES) in target mRNA species under stress conditions. Plays a role for miRNA-guided RNA cleavage and translation suppression by promoting association of AGO2-containing miRNPs with their cognate target mRNAs. Associates with miRNAs during muscle cell differentiation. Binds preferentially to 5'-CGCGCG[GCA]-3' motif in vitro. The chain is RNA-binding protein 4 (RBM4) from Macaca fascicularis (Crab-eating macaque).